We begin with the raw amino-acid sequence, 264 residues long: Thymidylate synthase (264 aa).

DUMP is bound at residue Arg-21. A (6R)-5,10-methylene-5,6,7,8-tetrahydrofolate-binding site is contributed by His-51. 126–127 contacts dUMP; it reads RR. Residue Cys-146 is the Nucleophile of the active site. Residues 166–169, Asn-177, and 207–209 contribute to the dUMP site; these read RSAD and HIY. Asp-169 contributes to the (6R)-5,10-methylene-5,6,7,8-tetrahydrofolate binding site. Ala-263 lines the (6R)-5,10-methylene-5,6,7,8-tetrahydrofolate pocket.

Belongs to the thymidylate synthase family. Bacterial-type ThyA subfamily. As to quaternary structure, homodimer.

It localises to the cytoplasm. The enzyme catalyses dUMP + (6R)-5,10-methylene-5,6,7,8-tetrahydrofolate = 7,8-dihydrofolate + dTMP. The protein operates within pyrimidine metabolism; dTTP biosynthesis. In terms of biological role, catalyzes the reductive methylation of 2'-deoxyuridine-5'-monophosphate (dUMP) to 2'-deoxythymidine-5'-monophosphate (dTMP) while utilizing 5,10-methylenetetrahydrofolate (mTHF) as the methyl donor and reductant in the reaction, yielding dihydrofolate (DHF) as a by-product. This enzymatic reaction provides an intracellular de novo source of dTMP, an essential precursor for DNA biosynthesis. The chain is Thymidylate synthase from Porphyromonas gingivalis (strain ATCC BAA-308 / W83).